The sequence spans 1070 residues: DNA-directed RNA polymerase subunit beta (1070 aa).

The protein belongs to the RNA polymerase beta chain family. As to quaternary structure, in plastids the minimal PEP RNA polymerase catalytic core is composed of four subunits: alpha, beta, beta', and beta''. When a (nuclear-encoded) sigma factor is associated with the core the holoenzyme is formed, which can initiate transcription.

The protein localises to the plastid. Its subcellular location is the chloroplast. It carries out the reaction RNA(n) + a ribonucleoside 5'-triphosphate = RNA(n+1) + diphosphate. DNA-dependent RNA polymerase catalyzes the transcription of DNA into RNA using the four ribonucleoside triphosphates as substrates. This is DNA-directed RNA polymerase subunit beta from Gossypium barbadense (Sea Island cotton).